A 62-amino-acid polypeptide reads, in one-letter code: Photosystem II reaction center protein Z (62 aa).

Helical transmembrane passes span 8–28 (AVFALIATSFLLVIGVPVVLA) and 41–61 (FSGASLWIGLVFLVGILNSFI).

The protein belongs to the PsbZ family. In terms of assembly, PSII is composed of 1 copy each of membrane proteins PsbA, PsbB, PsbC, PsbD, PsbE, PsbF, PsbH, PsbI, PsbJ, PsbK, PsbL, PsbM, PsbT, PsbY, PsbZ, Psb30/Ycf12, at least 3 peripheral proteins of the oxygen-evolving complex and a large number of cofactors. It forms dimeric complexes.

It is found in the plastid. It localises to the chloroplast thylakoid membrane. In terms of biological role, may control the interaction of photosystem II (PSII) cores with the light-harvesting antenna, regulates electron flow through the 2 photosystem reaction centers. PSII is a light-driven water plastoquinone oxidoreductase, using light energy to abstract electrons from H(2)O, generating a proton gradient subsequently used for ATP formation. The polypeptide is Photosystem II reaction center protein Z (Anthoceros angustus (Hornwort)).